A 305-amino-acid chain; its full sequence is Probable lipid kinase YegS-like (305 aa).

In terms of domain architecture, DAGKc spans 1–129; sequence MTQRRAMLIL…VDLGEVGGKL (129 aa). ATP contacts are provided by residues threonine 39, 65 to 71, and threonine 92; that span reads GDGTLRD. Mg(2+) is bound by residues leucine 210, aspartate 213, and leucine 215. Residue glutamate 268 is the Proton acceptor of the active site.

The protein belongs to the diacylglycerol/lipid kinase family. YegS lipid kinase subfamily. It depends on Mg(2+) as a cofactor. The cofactor is Ca(2+).

It localises to the cytoplasm. Its function is as follows. Probably phosphorylates lipids; the in vivo substrate is unknown. The sequence is that of Probable lipid kinase YegS-like from Pseudomonas savastanoi pv. phaseolicola (strain 1448A / Race 6) (Pseudomonas syringae pv. phaseolicola (strain 1448A / Race 6)).